The sequence spans 376 residues: Glutamate 5-kinase (376 aa).

Position 17 (Lys17) interacts with ATP. Residues Ser56, Asp144, and Asn156 each contribute to the substrate site. ATP is bound by residues 176 to 177 (TD) and 218 to 224 (TGGMQSK). Residues 283–359 (KGTLLLDAGA…QSREIASVLK (77 aa)) form the PUA domain.

It belongs to the glutamate 5-kinase family.

It is found in the cytoplasm. The catalysed reaction is L-glutamate + ATP = L-glutamyl 5-phosphate + ADP. It functions in the pathway amino-acid biosynthesis; L-proline biosynthesis; L-glutamate 5-semialdehyde from L-glutamate: step 1/2. Its function is as follows. Catalyzes the transfer of a phosphate group to glutamate to form L-glutamate 5-phosphate. The polypeptide is Glutamate 5-kinase (Desulfotalea psychrophila (strain LSv54 / DSM 12343)).